The sequence spans 91 residues: Putative defensin-like protein 221 (91 aa).

Positions 1–19 (MKTLFFFLTIAVLVSSCTS) are cleaved as a signal peptide. Disulfide bonds link cysteine 61-cysteine 78, cysteine 64-cysteine 83, and cysteine 68-cysteine 85.

This sequence belongs to the DEFL family.

It localises to the secreted. In Arabidopsis thaliana (Mouse-ear cress), this protein is Putative defensin-like protein 221.